The sequence spans 254 residues: Bowman-Birk type bran trypsin inhibitor (254 aa).

The signal sequence occupies residues 1–22 (MSNTTMATSTILLFLLAGLAAA). Residues 23–118 (HGDGDTTIRL…KCTAALDGLS (96 aa)) constitute a propeptide that is removed on maturation. 3 consecutive repeats follow at residues 46 to 120 (KPWD…LSME), 121 to 187 (RPWK…FCTP), and 188 to 251 (RPWG…CKPR). 9 disulfide bridges follow: Cys-125-Cys-185, Cys-126-Cys-143, Cys-152-Cys-159, Cys-156-Cys-172, Cys-193-Cys-248, Cys-194-Cys-209, Cys-199-Cys-207, Cys-216-Cys-223, and Cys-220-Cys-236. Positions 252 to 254 (AEN) are excised as a propeptide.

This sequence belongs to the Bowman-Birk serine protease inhibitor family.

The polypeptide is Bowman-Birk type bran trypsin inhibitor (RBBI3.3) (Oryza sativa subsp. japonica (Rice)).